The chain runs to 118 residues: Large ribosomal subunit protein uL18 (118 aa).

It belongs to the universal ribosomal protein uL18 family. In terms of assembly, part of the 50S ribosomal subunit; part of the 5S rRNA/L5/L18/L25 subcomplex. Contacts the 5S and 23S rRNAs.

Functionally, this is one of the proteins that bind and probably mediate the attachment of the 5S RNA into the large ribosomal subunit, where it forms part of the central protuberance. The polypeptide is Large ribosomal subunit protein uL18 (Sulfurimonas denitrificans (strain ATCC 33889 / DSM 1251) (Thiomicrospira denitrificans (strain ATCC 33889 / DSM 1251))).